The sequence spans 761 residues: Ribonucleoside-diphosphate reductase 1 subunit alpha (761 aa).

The region spanning 5-95 (LLVTKRDGRT…IFHLRKKAFG (91 aa)) is the ATP-cone domain. Residues lysine 9, 15–21 (ERINLDK), threonine 55, and lysine 91 contribute to the ATP site. A GDP-binding site is contributed by threonine 209. Cysteine 225 and cysteine 462 form a disulfide bridge. DTTP is bound by residues 232–234 (DSL), arginine 262, and arginine 269. Asparagine 437 contributes to the GDP binding site. Asparagine 437 (proton acceptor) is an active-site residue. Cysteine 439 functions as the Cysteine radical intermediate in the catalytic mechanism. GDP contacts are provided by residues glutamate 441 and 623-625 (ETS). Catalysis depends on glutamate 441, which acts as the Proton acceptor.

This sequence belongs to the ribonucleoside diphosphate reductase large chain family. As to quaternary structure, tetramer of two alpha (R1) and two beta (R2) subunits. The B1 protein is a dimer of alpha subunits. A radical transfer pathway occurs between 'Tyr-122' of R2 and R1.

It catalyses the reaction a 2'-deoxyribonucleoside 5'-diphosphate + [thioredoxin]-disulfide + H2O = a ribonucleoside 5'-diphosphate + [thioredoxin]-dithiol. With respect to regulation, under complex allosteric control mediated by deoxynucleoside triphosphates and ATP binding to separate specificity and activation sites on the alpha subunit. The type of nucleotide bound at the specificity site determines substrate preference. It seems probable that ATP makes the enzyme reduce CDP and UDP, dGTP favors ADP reduction and dTTP favors GDP reduction. Stimulated by ATP and inhibited by dATP binding to the activity site. In terms of biological role, provides the precursors necessary for DNA synthesis. Catalyzes the biosynthesis of deoxyribonucleotides from the corresponding ribonucleotides. R1 contains the binding sites for both substrates and allosteric effectors and carries out the actual reduction of the ribonucleotide. The chain is Ribonucleoside-diphosphate reductase 1 subunit alpha (nrdA) from Salmonella typhimurium (strain LT2 / SGSC1412 / ATCC 700720).